A 498-amino-acid polypeptide reads, in one-letter code: ATP synthase subunit beta, chloroplastic (498 aa).

172–179 (GGAGVGKT) contacts ATP.

The protein belongs to the ATPase alpha/beta chains family. In terms of assembly, F-type ATPases have 2 components, CF(1) - the catalytic core - and CF(0) - the membrane proton channel. CF(1) has five subunits: alpha(3), beta(3), gamma(1), delta(1), epsilon(1). CF(0) has four main subunits: a(1), b(1), b'(1) and c(9-12).

The protein resides in the plastid. The protein localises to the chloroplast thylakoid membrane. The enzyme catalyses ATP + H2O + 4 H(+)(in) = ADP + phosphate + 5 H(+)(out). Functionally, produces ATP from ADP in the presence of a proton gradient across the membrane. The catalytic sites are hosted primarily by the beta subunits. This chain is ATP synthase subunit beta, chloroplastic, found in Nicotiana bigelovii (Bigelov's tobacco).